Reading from the N-terminus, the 226-residue chain is Enolase-phosphatase E1 (226 aa).

It belongs to the HAD-like hydrolase superfamily. MasA/MtnC family. As to quaternary structure, monomer. Mg(2+) is required as a cofactor.

The catalysed reaction is 5-methylsulfanyl-2,3-dioxopentyl phosphate + H2O = 1,2-dihydroxy-5-(methylsulfanyl)pent-1-en-3-one + phosphate. It participates in amino-acid biosynthesis; L-methionine biosynthesis via salvage pathway; L-methionine from S-methyl-5-thio-alpha-D-ribose 1-phosphate: step 3/6. The protein operates within amino-acid biosynthesis; L-methionine biosynthesis via salvage pathway; L-methionine from S-methyl-5-thio-alpha-D-ribose 1-phosphate: step 4/6. Functionally, bifunctional enzyme that catalyzes the enolization of 2,3-diketo-5-methylthiopentyl-1-phosphate (DK-MTP-1-P) into the intermediate 2-hydroxy-3-keto-5-methylthiopentenyl-1-phosphate (HK-MTPenyl-1-P), which is then dephosphorylated to form the acireductone 1,2-dihydroxy-3-keto-5-methylthiopentene (DHK-MTPene). This is Enolase-phosphatase E1 from Alcanivorax borkumensis (strain ATCC 700651 / DSM 11573 / NCIMB 13689 / SK2).